Reading from the N-terminus, the 62-residue chain is Large ribosomal subunit protein uL29 (62 aa).

This sequence belongs to the universal ribosomal protein uL29 family.

The sequence is that of Large ribosomal subunit protein uL29 from Desulfatibacillum aliphaticivorans.